Here is a 505-residue protein sequence, read N- to C-terminus: Trans-cinnamate 4-monooxygenase (505 aa).

Residues 3–23 (LLLLEKTLLGSFVAVLVAILV) traverse the membrane as a helical segment. Residues 213 to 218 (RSRLAQ) and alanine 306 each bind (E)-cinnamate. Cysteine 447 provides a ligand contact to heme.

Belongs to the cytochrome P450 family. Heme is required as a cofactor.

The protein resides in the membrane. The catalysed reaction is (E)-cinnamate + reduced [NADPH--hemoprotein reductase] + O2 = (E)-4-coumarate + oxidized [NADPH--hemoprotein reductase] + H2O + H(+). Its pathway is phenylpropanoid metabolism; trans-4-coumarate biosynthesis; trans-4-coumarate from trans-cinnamate: step 1/1. In terms of biological role, catalyzes the first oxidative step of the phenylpropanoid pathway in higher plants by transforming trans-cinnamate into p-coumarate. The compounds formed by this pathway are essential components for lignification, pollination, and defense against ultraviolet light, predators and pathogens. The protein is Trans-cinnamate 4-monooxygenase (CYP73A16) of Populus kitakamiensis (Aspen).